We begin with the raw amino-acid sequence, 681 residues long: Minichromosome maintenance domain-containing protein 2 (681 aa).

Position 292 is a phosphoserine (Ser292). Residues 533-621 (KQFTTEDFEK…LIAALLLEIS (89 aa)) form the MCM domain.

In terms of tissue distribution, predominantly expressed in the gonads and the brain. Not detected in the heart, lung, nor embryonic fibroblasts.

Its function is as follows. Plays an important role in meiotic recombination and associated DNA double-strand break repair. The chain is Minichromosome maintenance domain-containing protein 2 (Mcmdc2) from Mus musculus (Mouse).